Reading from the N-terminus, the 154-residue chain is Ribosome maturation factor RimP (154 aa).

This sequence belongs to the RimP family.

Its subcellular location is the cytoplasm. Its function is as follows. Required for maturation of 30S ribosomal subunits. This is Ribosome maturation factor RimP from Natranaerobius thermophilus (strain ATCC BAA-1301 / DSM 18059 / JW/NM-WN-LF).